The sequence spans 1551 residues: Serine/threonine-protein kinase MRCK gamma (1551 aa).

In terms of domain architecture, Protein kinase spans 71–337 (FEILKVIGRG…LDDFRKHPFF (267 aa)). ATP is bound by residues 77-85 (IGRGAFGEV) and lysine 100. The active-site Proton acceptor is the aspartate 195. Phosphoserine; by autocatalysis is present on residues serine 216 and serine 228. Residue threonine 234 is modified to Phosphothreonine; by autocatalysis. Residues 338–408 (EGVDWERLAT…TSGSPFDVQS (71 aa)) enclose the AGC-kinase C-terminal domain. Coiled coils occupy residues 442-675 (QPQE…TESN) and 729-801 (KARR…QARG). A disordered region spans residues 578–605 (QESSQAKTVHAAPETNGIGSPEGQSQEA). Residues 820–886 (TEKDSAKDPG…SHTLRPRSFP (67 aa)) form a disordered region. Positions 839–849 (AEAELRPEGRR) are enriched in basic and acidic residues. The Phorbol-ester/DAG-type zinc finger occupies 877–926 (SHTLRPRSFPSPTKCLRCTSLMLGLGRQGLGCDTCGYFCHSACASQAPPC). A PH domain is found at 946 to 1065 (GTAYEGFLSV…WLQVLGELQR (120 aa)). The region spanning 1091–1365 (LPHALCAAVI…RPLNPEGSLF (275 aa)) is the CNH domain. In terms of domain architecture, CRIB spans 1436–1449 (ISPPTNFNHLVHVG). Residues 1441-1551 (NFNHLVHVGP…PPDPESESSP (111 aa)) form a disordered region. The span at 1455 to 1468 (PNTRDGTRAQEQKS) shows a compositional bias: basic and acidic residues. At serine 1481 the chain carries Phosphoserine. Polar residues predominate over residues 1511-1527 (TSLSSESVSCPQGSLSP).

Belongs to the protein kinase superfamily. AGC Ser/Thr protein kinase family. DMPK subfamily. As to quaternary structure, homodimer and homotetramer via the coiled coil regions. Interacts tightly with GTP-bound but not GDP-bound CDC42. Mg(2+) is required as a cofactor.

The protein localises to the cytoplasm. It carries out the reaction L-seryl-[protein] + ATP = O-phospho-L-seryl-[protein] + ADP + H(+). The enzyme catalyses L-threonyl-[protein] + ATP = O-phospho-L-threonyl-[protein] + ADP + H(+). With respect to regulation, maintained in an inactive, closed conformation by an interaction between the kinase domain and the negative autoregulatory C-terminal coiled-coil region. Agonist binding to the phorbol ester binding site disrupts this, releasing the kinase domain to allow N-terminus-mediated dimerization and kinase activation by transautophosphorylation. Its function is as follows. May act as a downstream effector of CDC42 in cytoskeletal reorganization. Contributes to the actomyosin contractility required for cell invasion, through the regulation of MYPT1 and thus MLC2 phosphorylation. The chain is Serine/threonine-protein kinase MRCK gamma from Mus musculus (Mouse).